The sequence spans 398 residues: Phosphoglycerate kinase (398 aa).

Substrate contacts are provided by residues 23 to 25, R38, 61 to 64, R122, and R155; these read DFN and HMGK. ATP contacts are provided by residues K206, G297, E328, and 354–357; that span reads GGDS.

Belongs to the phosphoglycerate kinase family. Monomer.

The protein localises to the cytoplasm. It catalyses the reaction (2R)-3-phosphoglycerate + ATP = (2R)-3-phospho-glyceroyl phosphate + ADP. The protein operates within carbohydrate degradation; glycolysis; pyruvate from D-glyceraldehyde 3-phosphate: step 2/5. The polypeptide is Phosphoglycerate kinase (Clostridium botulinum (strain Okra / Type B1)).